Reading from the N-terminus, the 282-residue chain is 2-dehydro-3-deoxyphosphooctonate aldolase (282 aa).

The protein belongs to the KdsA family.

It localises to the cytoplasm. The catalysed reaction is D-arabinose 5-phosphate + phosphoenolpyruvate + H2O = 3-deoxy-alpha-D-manno-2-octulosonate-8-phosphate + phosphate. It participates in carbohydrate biosynthesis; 3-deoxy-D-manno-octulosonate biosynthesis; 3-deoxy-D-manno-octulosonate from D-ribulose 5-phosphate: step 2/3. It functions in the pathway bacterial outer membrane biogenesis; lipopolysaccharide biosynthesis. This Agrobacterium fabrum (strain C58 / ATCC 33970) (Agrobacterium tumefaciens (strain C58)) protein is 2-dehydro-3-deoxyphosphooctonate aldolase.